Reading from the N-terminus, the 734-residue chain is Alpha-catulin (734 aa).

A phosphoserine mark is found at S374 and S538.

The protein belongs to the vinculin/alpha-catenin family. In terms of assembly, interacts with ARHGEF1. Interacts with DTNA. The interaction is required for correct localization of both CTNL1 and DTNA. As to expression, widely expressed. Expressed at lower level in neural tissues and at the highest level in the adrenal gland.

It is found in the cytoplasm. It localises to the cytoskeleton. Its subcellular location is the cell membrane. In terms of biological role, may modulate the Rho pathway signaling by providing a scaffold for the Lbc Rho guanine nucleotide exchange factor (ARHGEF1). The sequence is that of Alpha-catulin (CTNNAL1) from Homo sapiens (Human).